We begin with the raw amino-acid sequence, 337 residues long: Anthranilate phosphoribosyltransferase (337 aa).

Residues G80, 83–84 (GD), T88, 90–93 (NIST), 108–116 (KHGNRAVSS), and S120 each bind 5-phospho-alpha-D-ribose 1-diphosphate. Residue G80 participates in anthranilate binding. S92 provides a ligand contact to Mg(2+). Residue N111 participates in anthranilate binding. R166 contacts anthranilate. Residues D224 and E225 each coordinate Mg(2+).

It belongs to the anthranilate phosphoribosyltransferase family. In terms of assembly, homodimer. It depends on Mg(2+) as a cofactor.

The catalysed reaction is N-(5-phospho-beta-D-ribosyl)anthranilate + diphosphate = 5-phospho-alpha-D-ribose 1-diphosphate + anthranilate. It participates in amino-acid biosynthesis; L-tryptophan biosynthesis; L-tryptophan from chorismate: step 2/5. In terms of biological role, catalyzes the transfer of the phosphoribosyl group of 5-phosphorylribose-1-pyrophosphate (PRPP) to anthranilate to yield N-(5'-phosphoribosyl)-anthranilate (PRA). The chain is Anthranilate phosphoribosyltransferase from Anaeromyxobacter sp. (strain K).